The sequence spans 474 residues: Serine--tRNA ligase (474 aa).

Residue 278–280 (TAE) participates in L-serine binding. 309–311 (RSE) serves as a coordination point for ATP. Residue glutamate 332 coordinates L-serine. ATP is bound at residue 396–399 (EISS). Serine 432 provides a ligand contact to L-serine.

It belongs to the class-II aminoacyl-tRNA synthetase family. Type-1 seryl-tRNA synthetase subfamily. As to quaternary structure, homodimer. The tRNA molecule binds across the dimer.

The protein localises to the cytoplasm. The catalysed reaction is tRNA(Ser) + L-serine + ATP = L-seryl-tRNA(Ser) + AMP + diphosphate + H(+). It carries out the reaction tRNA(Sec) + L-serine + ATP = L-seryl-tRNA(Sec) + AMP + diphosphate + H(+). It participates in aminoacyl-tRNA biosynthesis; selenocysteinyl-tRNA(Sec) biosynthesis; L-seryl-tRNA(Sec) from L-serine and tRNA(Sec): step 1/1. In terms of biological role, catalyzes the attachment of serine to tRNA(Ser). Is also able to aminoacylate tRNA(Sec) with serine, to form the misacylated tRNA L-seryl-tRNA(Sec), which will be further converted into selenocysteinyl-tRNA(Sec). The polypeptide is Serine--tRNA ligase (Caulobacter sp. (strain K31)).